The chain runs to 153 residues: Adenosine 5'-monophosphoramidase HINT3 (153 aa).

An HIT domain is found at 20–130; the sequence is IFCRIANKQE…PASQLGFLSR (111 aa). Residues 46–47 and 115–117 each bind AMP; these read DI and HLH. A Histidine triad motif motif is present at residues 113–117; the sequence is HLHLH. H115 (tele-AMP-histidine intermediate) is an active-site residue.

The protein belongs to the HINT family. As to quaternary structure, forms dimers to octamers and even larger oligomer.

The protein localises to the cytoplasm. It is found in the nucleus. It carries out the reaction adenosine 5'-phosphoramidate + H2O = AMP + NH4(+). Exhibits adenosine 5'-monophosphoramidase activity, hydrolyzing purine nucleotide phosphoramidates with a single phosphate group such as adenosine 5'monophosphoramidate (AMP-NH2) to yield AMP and NH2. Hydrolyzes lysyl-AMP (AMP-N-epsilon-(N-alpha-acetyl lysine methyl ester)) generated by lysine tRNA ligase. The sequence is that of Adenosine 5'-monophosphoramidase HINT3 (hint3) from Xenopus tropicalis (Western clawed frog).